A 177-amino-acid polypeptide reads, in one-letter code: Large ribosomal subunit protein uL6 (177 aa).

The protein belongs to the universal ribosomal protein uL6 family. Part of the 50S ribosomal subunit.

In terms of biological role, this protein binds to the 23S rRNA, and is important in its secondary structure. It is located near the subunit interface in the base of the L7/L12 stalk, and near the tRNA binding site of the peptidyltransferase center. The chain is Large ribosomal subunit protein uL6 from Alteromonas mediterranea (strain DSM 17117 / CIP 110805 / LMG 28347 / Deep ecotype).